A 623-amino-acid chain; its full sequence is Interleukin-27 receptor subunit alpha (623 aa).

A signal peptide spans 1–24 (MNRLRVARLTPLELLLSLMSLLLG). The Extracellular portion of the chain corresponds to 25–510 (TRPHGSPGPL…HLPDNRIRWK (486 aa)). 2 Fibronectin type-III domains span residues 30 to 124 (SPGP…MKPD) and 125 to 225 (TPQI…TPFL). N-linked (GlcNAc...) asparagine glycosylation occurs at N46. The short motif at 211–215 (WGEWS) is the WSXWS motif element. N296, N305, N360, N368, and N461 each carry an N-linked (GlcNAc...) asparagine glycan. Fibronectin type-III domains follow at residues 316 to 412 (APCD…VPLA) and 413 to 505 (GPAV…LPDN). The helical transmembrane segment at 511-531 (ALPWFLSLWGLLLMGCGLSLA) threads the bilayer. The Cytoplasmic portion of the chain corresponds to 532–623 (STRCLQARCL…PTPEELGLLV (92 aa)). A Box 1 motif motif is present at residues 552–560 (IWERVPDPA).

Belongs to the type I cytokine receptor family. Type 2 subfamily. In terms of tissue distribution, expressed in CD4+ and CD8+ T-cells, B-cells, natural killer cells and macrophages. Highest levels in CD4+ T-cells and natural killer cells. Expression highest in Th0 cells.

It is found in the membrane. Its function is as follows. Receptor for IL27. Requires IL6ST/GP130 to mediate signal transduction in response to IL27. This signaling system acts through STAT3 and STAT1. Involved in the regulation of Th1-type immune responses. Also appears to be involved in innate defense mechanisms. The polypeptide is Interleukin-27 receptor subunit alpha (Il27ra) (Mus musculus (Mouse)).